Reading from the N-terminus, the 440-residue chain is G-protein coupled receptor family C group 5 member C (440 aa).

The signal sequence occupies residues 1–22 (MATHRTLLMCLGLPLFFPGALA). Residues 23-49 (QNHAPPGCSPDLDPLYYNLCDRSGAWG) are Extracellular-facing. A helical membrane pass occupies residues 50–70 (IVSEAVAGAGIITTFVLTIIL). Residues 71–84 (VASLPFVQDTKKRS) are Cytoplasmic-facing. The chain crosses the membrane as a helical span at residues 85 to 105 (LLGTQVFFLLGTLGLFCLVFA). The Extracellular segment spans residues 106–119 (CVVKPDFSTCASRR). Residues 120–140 (FLFGVLFAICFSCLVAHVLSL) traverse the membrane as a helical segment. Residues 141–155 (NFLTRKNHGPRGWVI) lie on the Cytoplasmic side of the membrane. Residues 156–176 (FTVALLLTLVEVIINTEWLII) traverse the membrane as a helical segment. The Extracellular portion of the chain corresponds to 177-207 (TLVRGGGQVSPLGNVSADSTMTSPCAIANMD). Residue Asn-190 is glycosylated (N-linked (GlcNAc...) asparagine). The helical transmembrane segment at 208–228 (FVMALIYVMLLLLTAFLGAWP) threads the bilayer. The Cytoplasmic portion of the chain corresponds to 229 to 240 (TLCGRFKRWRKH). A helical transmembrane segment spans residues 241 to 261 (GVFVLLTTVISIAIWVVWIVM). Over 262–278 (YTYGNEQHHSPTWDDPT) the chain is Extracellular. Residues 279–299 (LAIALAANAWTFVLFYVIPEV) traverse the membrane as a helical segment. Topologically, residues 300–440 (SQVTKPSPEQ…QVFRNPYVWD (141 aa)) are cytoplasmic. A phosphoserine mark is found at Ser-343, Ser-382, Ser-402, and Ser-405. Position 413 is a phosphotyrosine (Tyr-413). The residue at position 422 (Thr-422) is a Phosphothreonine.

Belongs to the G-protein coupled receptor 3 family.

The protein resides in the cell membrane. Its function is as follows. This retinoic acid-inducible G-protein coupled receptor provide evidence for a possible interaction between retinoid and G-protein signaling pathways. This chain is G-protein coupled receptor family C group 5 member C (Gprc5c), found in Mus musculus (Mouse).